A 248-amino-acid polypeptide reads, in one-letter code: 2,3-bisphosphoglycerate-dependent phosphoglycerate mutase (248 aa).

Substrate is bound by residues 8-15 (RHGESEWN), 21-22 (TG), Arg60, 87-90 (ERHY), Lys98, 114-115 (RR), and 183-184 (GN). Catalysis depends on His9, which acts as the Tele-phosphohistidine intermediate. Residue Glu87 is the Proton donor/acceptor of the active site.

Belongs to the phosphoglycerate mutase family. BPG-dependent PGAM subfamily.

The enzyme catalyses (2R)-2-phosphoglycerate = (2R)-3-phosphoglycerate. It participates in carbohydrate degradation; glycolysis; pyruvate from D-glyceraldehyde 3-phosphate: step 3/5. Functionally, catalyzes the interconversion of 2-phosphoglycerate and 3-phosphoglycerate. This chain is 2,3-bisphosphoglycerate-dependent phosphoglycerate mutase, found in Coprothermobacter proteolyticus (strain ATCC 35245 / DSM 5265 / OCM 4 / BT).